The following is a 344-amino-acid chain: L-rhamnose-proton symporter (344 aa).

Transmembrane regions (helical) follow at residues 4–24 (AITM…CFYA), 38–58 (WSVG…ALLL), 68–88 (FSLS…IGNI), 101–121 (MGIG…TPII), 137–157 (TLLG…AGQL), 175–195 (LVLA…MNAA), 214–234 (LPSY…FCFI), 259–279 (VLLS…YAWG), 290–310 (ISWM…GLVL), and 323–343 (VLSL…IGMA).

It belongs to the L-rhamnose transporter (TC 2.A.7.6) family.

The protein localises to the cell inner membrane. The enzyme catalyses L-rhamnopyranose(in) + H(+)(in) = L-rhamnopyranose(out) + H(+)(out). Functionally, uptake of L-rhamnose across the cytoplasmic membrane with the concomitant transport of protons into the cell (symport system). The sequence is that of L-rhamnose-proton symporter from Shigella sonnei (strain Ss046).